Reading from the N-terminus, the 323-residue chain is 8-oxo-dGDP phosphatase NUDT18 (323 aa).

The Nudix hydrolase domain occupies 37 to 167 (RLRKNVCYVV…DILHLVELAA (131 aa)). A Mg(2+)-binding site is contributed by L58. The short motif at 76-97 (GRMEPGETIVEALQREVKEEAG) is the Nudix box element.

It belongs to the Nudix hydrolase family. It depends on Mn(2+) as a cofactor. Mg(2+) serves as cofactor.

The enzyme catalyses 8-oxo-dGDP + H2O = 8-oxo-dGMP + phosphate + H(+). It carries out the reaction 8-oxo-dADP + H2O = 8-oxo-dAMP + phosphate + H(+). The catalysed reaction is 2-oxo-dADP + H2O = 2-oxo-dAMP + phosphate + H(+). It catalyses the reaction 8-oxo-GDP + H2O = 8-oxo-GMP + phosphate + H(+). Functionally, mediates the hydrolysis of oxidized nucleoside diphosphate derivatives. Hydrolyzes 8-oxo-7,8-dihydroguanine (8-oxo-Gua)-containing deoxyribo- and ribonucleoside diphosphates to the monophosphates. Hydrolyzes 8-oxo-dGDP and 8-oxo-GDP with the same efficiencies. Also hydrolyzes 8-OH-dADP and 2-OH-dADP. Exhibited no or minimal hydrolysis activity against 8-oxo-dGTP, 8-oxo-GTP, dGTP, GTP, dGDP and GDP. Probably removes oxidized guanine nucleotides from both the DNA and RNA precursor pools. In Homo sapiens (Human), this protein is 8-oxo-dGDP phosphatase NUDT18.